The sequence spans 49 residues: Large ribosomal subunit protein bL33 (49 aa).

This sequence belongs to the bacterial ribosomal protein bL33 family.

This is Large ribosomal subunit protein bL33 from Streptococcus suis (strain 98HAH33).